An 88-amino-acid chain; its full sequence is Adenylosuccinate lyase (88 aa).

Residues 4-5 (RY) and 67-69 (KHD) contribute to the N(6)-(1,2-dicarboxyethyl)-AMP site.

The protein belongs to the lyase 1 family. Adenylosuccinate lyase subfamily. In terms of assembly, homotetramer and homodimer. Residues from neighboring subunits contribute catalytic and substrate-binding residues to each active site.

The enzyme catalyses N(6)-(1,2-dicarboxyethyl)-AMP = fumarate + AMP. The catalysed reaction is (2S)-2-[5-amino-1-(5-phospho-beta-D-ribosyl)imidazole-4-carboxamido]succinate = 5-amino-1-(5-phospho-beta-D-ribosyl)imidazole-4-carboxamide + fumarate. It functions in the pathway purine metabolism; AMP biosynthesis via de novo pathway; AMP from IMP: step 2/2. Its pathway is purine metabolism; IMP biosynthesis via de novo pathway; 5-amino-1-(5-phospho-D-ribosyl)imidazole-4-carboxamide from 5-amino-1-(5-phospho-D-ribosyl)imidazole-4-carboxylate: step 2/2. Functionally, catalyzes two reactions in de novo purine nucleotide biosynthesis. Catalyzes the breakdown of 5-aminoimidazole- (N-succinylocarboxamide) ribotide (SAICAR or 2-[5-amino-1-(5-phospho-beta-D-ribosyl)imidazole-4-carboxamido]succinate) to 5-aminoimidazole-4-carboxamide ribotide (AICAR or 5-amino-1-(5-phospho-beta-D-ribosyl)imidazole-4-carboxamide) and fumarate, and of adenylosuccinate (ADS or N(6)-(1,2-dicarboxyethyl)-AMP) to adenosine monophosphate (AMP) and fumarate. The polypeptide is Adenylosuccinate lyase (purB) (Spiroplasma citri).